We begin with the raw amino-acid sequence, 864 residues long: DNA mismatch repair protein MutS (864 aa).

Residue 623 to 630 (GPNMGGKS) coordinates ATP.

Belongs to the DNA mismatch repair MutS family.

This protein is involved in the repair of mismatches in DNA. It is possible that it carries out the mismatch recognition step. This protein has a weak ATPase activity. The polypeptide is DNA mismatch repair protein MutS (Polaromonas sp. (strain JS666 / ATCC BAA-500)).